Here is a 216-residue protein sequence, read N- to C-terminus: Adenylate kinase (216 aa).

Residue 10 to 15 participates in ATP binding; that stretch reads GAGKGT. An NMP region spans residues 30 to 59; sequence STGDMLRAAVKAGTPLGLELKKVMDAGQLV. Residues threonine 31, arginine 36, 57–59, 85–88, and glutamine 92 each bind AMP; these read QLV and GFPR. The LID stretch occupies residues 122–159; that stretch reads GRRVHLASGRTYHIQYNPPKVEGKDDETGEDLIQRDDD. Residues arginine 123 and 132 to 133 each bind ATP; that span reads TY. Arginine 156 and arginine 167 together coordinate AMP. Glycine 202 serves as a coordination point for ATP.

It belongs to the adenylate kinase family. As to quaternary structure, monomer.

The protein resides in the cytoplasm. It carries out the reaction AMP + ATP = 2 ADP. It functions in the pathway purine metabolism; AMP biosynthesis via salvage pathway; AMP from ADP: step 1/1. Functionally, catalyzes the reversible transfer of the terminal phosphate group between ATP and AMP. Plays an important role in cellular energy homeostasis and in adenine nucleotide metabolism. In Pseudomonas putida (strain ATCC 700007 / DSM 6899 / JCM 31910 / BCRC 17059 / LMG 24140 / F1), this protein is Adenylate kinase.